We begin with the raw amino-acid sequence, 331 residues long: ADP-L-glycero-D-manno-heptose-6-epimerase (331 aa).

Residues 11-12 (FI), 32-33 (DN), lysine 39, lysine 54, 75-79 (EGACS), and asparagine 92 contribute to the NADP(+) site. The active-site Proton acceptor is the tyrosine 139. NADP(+) is bound at residue lysine 143. Asparagine 168 is a substrate binding site. Positions 169 and 177 each coordinate NADP(+). The Proton acceptor role is filled by lysine 177. Residues arginine 179, histidine 186, 200–203 (FGEY), arginine 213, and tyrosine 292 contribute to the substrate site.

The protein belongs to the NAD(P)-dependent epimerase/dehydratase family. HldD subfamily. As to quaternary structure, homopentamer. It depends on NADP(+) as a cofactor.

It carries out the reaction ADP-D-glycero-beta-D-manno-heptose = ADP-L-glycero-beta-D-manno-heptose. Its pathway is nucleotide-sugar biosynthesis; ADP-L-glycero-beta-D-manno-heptose biosynthesis; ADP-L-glycero-beta-D-manno-heptose from D-glycero-beta-D-manno-heptose 7-phosphate: step 4/4. In terms of biological role, catalyzes the interconversion between ADP-D-glycero-beta-D-manno-heptose and ADP-L-glycero-beta-D-manno-heptose via an epimerization at carbon 6 of the heptose. This chain is ADP-L-glycero-D-manno-heptose-6-epimerase, found in Cupriavidus taiwanensis (strain DSM 17343 / BCRC 17206 / CCUG 44338 / CIP 107171 / LMG 19424 / R1) (Ralstonia taiwanensis (strain LMG 19424)).